We begin with the raw amino-acid sequence, 490 residues long: Probable cytochrome P450 308a1 (490 aa).

Cys431 contributes to the heme binding site.

The protein belongs to the cytochrome P450 family. Heme is required as a cofactor.

Its subcellular location is the endoplasmic reticulum membrane. The protein localises to the microsome membrane. May be involved in the metabolism of insect hormones and in the breakdown of synthetic insecticides. The protein is Probable cytochrome P450 308a1 (Cyp308a1) of Drosophila melanogaster (Fruit fly).